The following is a 149-amino-acid chain: MLSGPHPSPTFRPNPCPWPCLHSLWMEISPTQLCFLSPGPSPQSPSCCFQGMNSGSELGKLWRKLFKGIPRLSVSHFDFYCGTCVLLGRPQIPQGSSLGNDIDQYPVVFRNASDQGSWMQLEMLLRKLSDLVWTSDALSDKILEDGLVP.

This is an uncharacterized protein from Homo sapiens (Human).